A 951-amino-acid chain; its full sequence is Protein inturned (951 aa).

Disordered regions lie at residues 1–32 (MEHS…FSSS), 189–208 (SSRN…NQRL), and 687–765 (TPKR…GGSG). The PDZ domain occupies 187 to 269 (HQSSRNSKRS…PMQLKLTFET (83 aa)). The span at 715 to 726 (PTRSSGGSDSGT) shows a compositional bias: low complexity. Residues 743–752 (MARKFGRRES) show a composition bias toward basic and acidic residues. The segment covering 754–765 (GSGGSDGSGGSG) has biased composition (gly residues).

Belongs to the inturned family. In terms of assembly, interacts with fuz and wdpcp; fuz, intu and wdpcp probably form the core CPLANE (ciliogenesis and planar polarity effectors) complex. Expressed in the neural plate during neural tube closure with subsequent strong expression in the ventral neural tube and in facial mesenchyme.

The protein localises to the cell surface. The protein resides in the cell membrane. It is found in the cytoplasm. It localises to the cytoskeleton. Its subcellular location is the cilium basal body. Functionally, plays a role in the definition of cell polarity via the planar cell polarity (PCP) cascade. Required for ciliogenesis by controlling the organization of the apical actin cytoskeleton and the positioning of the basal bodies at the apical cell surface, which in turn is essential for the normal orientation of elongating ciliary microtubules. Proposed to function as core component of a functional module called CPLANE (ciliogenesis and planar polarity effectors) involved in recruitment of peripheral IFT-A proteins to basal bodies. Controls the localization of both rhoa and disheveled in multi-ciliated cells. Has an indirect effect on hedgehog signaling. This chain is Protein inturned, found in Xenopus laevis (African clawed frog).